We begin with the raw amino-acid sequence, 394 residues long: Elongation factor Tu (394 aa).

Residues 10 to 204 (KPHVNIGTIG…AVDSYIPQPI (195 aa)) form the tr-type G domain. Residues 19–26 (GHVDHGKT) form a G1 region. A GTP-binding site is contributed by 19–26 (GHVDHGKT). Threonine 26 lines the Mg(2+) pocket. The G2 stretch occupies residues 60 to 64 (GITIS). The segment at 81–84 (DCPG) is G3. Residues 81–85 (DCPGH) and 136–139 (NKVD) each bind GTP. The tract at residues 136-139 (NKVD) is G4. Residues 174–176 (SAL) are G5.

This sequence belongs to the TRAFAC class translation factor GTPase superfamily. Classic translation factor GTPase family. EF-Tu/EF-1A subfamily. As to quaternary structure, monomer.

The protein resides in the cytoplasm. The enzyme catalyses GTP + H2O = GDP + phosphate + H(+). GTP hydrolase that promotes the GTP-dependent binding of aminoacyl-tRNA to the A-site of ribosomes during protein biosynthesis. The protein is Elongation factor Tu of Rickettsia prowazekii (strain Madrid E).